The sequence spans 171 residues: MKKPTSAPRSKAFGKQRRKTREELNQEARDRKRLKKHRGHAPGSRAAGGNSASGGGNQNQQKDPRIGSKTPVPLGVTEKVTQQHKPKSEKPMLSPQAELDLLETDERLDALLERLEAGETLSAEDQAWVDAKLDRIDELMQKLGLSYDDDEEDDEEDEKQEDMMRLLRGGN.

Disordered stretches follow at residues 1–99 (MKKP…QAEL) and 145–171 (LSYD…RGGN). The span at 20–30 (TREELNQEARD) shows a compositional bias: basic and acidic residues. Residues 31-40 (RKRLKKHRGH) show a composition bias toward basic residues. The segment covering 147-160 (YDDDEEDDEEDEKQ) has biased composition (acidic residues).

The protein belongs to the YihI family. Interacts with Der.

Its function is as follows. A GTPase-activating protein (GAP) that modifies Der/EngA GTPase function. May play a role in ribosome biogenesis. The chain is Der GTPase-activating protein YihI from Salmonella agona (strain SL483).